Here is a 539-residue protein sequence, read N- to C-terminus: Dihydrolipoyllysine-residue acetyltransferase component 2 of pyruvate dehydrogenase complex, mitochondrial (539 aa).

The N-terminal 102 residues, 1–102 (MASRIINHSK…SSQMRSVRGF (102 aa)), are a transit peptide targeting the mitochondrion. The interval 102-122 (FSSSSDLPPHQEIGMPSLSPT) is disordered. Residues 111 to 187 (HQEIGMPSLS…QVGEVIAITV (77 aa)) form the Lipoyl-binding domain. K152 is subject to N6-lipoyllysine. The tract at residues 196 to 244 (FKDYTPSSDTGPAAPEAKPAPSLPKEEKVEKPASAPEAKISKPSSAPSE) is disordered. Residues 248 to 285 (FASPLARKLAEDNNVPLSSIKGTGPEGRIVKADVEDFL) enclose the Peripheral subunit-binding (PSBD) domain. Residues H512 and D516 contribute to the active site.

Belongs to the 2-oxoacid dehydrogenase family. (R)-lipoate is required as a cofactor.

The protein localises to the mitochondrion matrix. It carries out the reaction N(6)-[(R)-dihydrolipoyl]-L-lysyl-[protein] + acetyl-CoA = N(6)-[(R)-S(8)-acetyldihydrolipoyl]-L-lysyl-[protein] + CoA. Functionally, the pyruvate dehydrogenase complex catalyzes the overall conversion of pyruvate to acetyl-CoA and CO(2). It contains multiple copies of three enzymatic components: pyruvate dehydrogenase (E1), dihydrolipoamide acetyltransferase (E2) and lipoamide dehydrogenase (E3). This Arabidopsis thaliana (Mouse-ear cress) protein is Dihydrolipoyllysine-residue acetyltransferase component 2 of pyruvate dehydrogenase complex, mitochondrial.